A 501-amino-acid polypeptide reads, in one-letter code: Ribose import ATP-binding protein RbsA (501 aa).

2 consecutive ABC transporter domains span residues 8 to 245 (LKMV…VGRT) and 255 to 500 (VKKG…VGIN). Residue 40-47 (GENGAGKS) participates in ATP binding.

This sequence belongs to the ABC transporter superfamily. Ribose importer (TC 3.A.1.2.1) family. In terms of assembly, the complex is composed of an ATP-binding protein (RbsA), two transmembrane proteins (RbsC) and a solute-binding protein (RbsB).

The protein resides in the cell membrane. It carries out the reaction D-ribose(out) + ATP + H2O = D-ribose(in) + ADP + phosphate + H(+). Functionally, part of the ABC transporter complex RbsABC involved in ribose import. Responsible for energy coupling to the transport system. In Clostridium perfringens (strain SM101 / Type A), this protein is Ribose import ATP-binding protein RbsA.